Reading from the N-terminus, the 209-residue chain is Kynurenine formamidase (209 aa).

Position 20 (W20) interacts with substrate. Residues H50, H54, and D56 each contribute to the Zn(2+) site. H60 acts as the Proton donor/acceptor in catalysis. The Zn(2+) site is built by H161 and E173.

This sequence belongs to the Cyclase 1 superfamily. KynB family. In terms of assembly, homodimer. Requires Zn(2+) as cofactor.

It carries out the reaction N-formyl-L-kynurenine + H2O = L-kynurenine + formate + H(+). It functions in the pathway amino-acid degradation; L-tryptophan degradation via kynurenine pathway; L-kynurenine from L-tryptophan: step 2/2. Catalyzes the hydrolysis of N-formyl-L-kynurenine to L-kynurenine, the second step in the kynurenine pathway of tryptophan degradation. The protein is Kynurenine formamidase of Bacillus anthracis.